The sequence spans 617 residues: Translation initiation factor IF-2 (617 aa).

A compositionally biased stretch (basic residues) spans 1–11 (MSKHKPRHFQK). The segment at 1 to 25 (MSKHKPRHFQKNKFDNRAKTSAKQQ) is disordered. A tr-type G domain is found at 119-288 (PRPPIVTIMG…ILLVAEVEDY (170 aa)). Positions 128–135 (GHVDHGKT) are G1. GTP is bound at residue 128-135 (GHVDHGKT). Residues 153-157 (GITQK) form a G2 region. The G3 stretch occupies residues 175 to 178 (DTPG). Residues 175–179 (DTPGH) and 229–232 (NKMD) each bind GTP. A G4 region spans residues 229–232 (NKMD). Residues 265-267 (SAL) form a G5 region.

Belongs to the TRAFAC class translation factor GTPase superfamily. Classic translation factor GTPase family. IF-2 subfamily.

Its subcellular location is the cytoplasm. Its function is as follows. One of the essential components for the initiation of protein synthesis. Protects formylmethionyl-tRNA from spontaneous hydrolysis and promotes its binding to the 30S ribosomal subunits. Also involved in the hydrolysis of GTP during the formation of the 70S ribosomal complex. The protein is Translation initiation factor IF-2 (infB) of Mycoplasma pneumoniae (strain ATCC 29342 / M129 / Subtype 1) (Mycoplasmoides pneumoniae).